Consider the following 56-residue polypeptide: MGHANIWYSHPRRYGQGSRSCRSCSNRHGLIRKYGLNICRQCFREYAHDIGFKKLD.

Zn(2+)-binding residues include cysteine 21, cysteine 24, cysteine 39, and cysteine 42.

This sequence belongs to the universal ribosomal protein uS14 family. In terms of assembly, component of the 40S small ribosomal subunit. It depends on Zn(2+) as a cofactor.

The protein resides in the cytoplasm. It is found in the cytosol. It localises to the rough endoplasmic reticulum. This is Small ribosomal subunit protein uS14 (RpS29) from Bombyx mori (Silk moth).